Consider the following 185-residue polypeptide: Ribosome-recycling factor (185 aa).

The protein belongs to the RRF family.

It localises to the cytoplasm. In terms of biological role, responsible for the release of ribosomes from messenger RNA at the termination of protein biosynthesis. May increase the efficiency of translation by recycling ribosomes from one round of translation to another. In Shewanella amazonensis (strain ATCC BAA-1098 / SB2B), this protein is Ribosome-recycling factor.